Here is a 156-residue protein sequence, read N- to C-terminus: ATP synthase subunit b (156 aa).

Residues 12-32 (VAFLIFVLFCMKYVWPPVITA) traverse the membrane as a helical segment.

It belongs to the ATPase B chain family. F-type ATPases have 2 components, F(1) - the catalytic core - and F(0) - the membrane proton channel. F(1) has five subunits: alpha(3), beta(3), gamma(1), delta(1), epsilon(1). F(0) has three main subunits: a(1), b(2) and c(10-14). The alpha and beta chains form an alternating ring which encloses part of the gamma chain. F(1) is attached to F(0) by a central stalk formed by the gamma and epsilon chains, while a peripheral stalk is formed by the delta and b chains.

The protein localises to the cell inner membrane. Functionally, f(1)F(0) ATP synthase produces ATP from ADP in the presence of a proton or sodium gradient. F-type ATPases consist of two structural domains, F(1) containing the extramembraneous catalytic core and F(0) containing the membrane proton channel, linked together by a central stalk and a peripheral stalk. During catalysis, ATP synthesis in the catalytic domain of F(1) is coupled via a rotary mechanism of the central stalk subunits to proton translocation. Component of the F(0) channel, it forms part of the peripheral stalk, linking F(1) to F(0). The chain is ATP synthase subunit b from Pseudomonas putida (strain GB-1).